The primary structure comprises 126 residues: Probable prefoldin subunit 6 (126 aa).

This sequence belongs to the prefoldin subunit beta family. In terms of assembly, heterohexamer of two PFD-alpha type and four PFD-beta type subunits. In terms of tissue distribution, expressed in embryonic blastomeres and gonads.

It is found in the cytoplasm. Binds specifically to cytosolic chaperonin (c-CPN) and transfers target proteins to it. Binds to nascent polypeptide chain and promotes folding in an environment in which there are many competing pathways for nonnative proteins. Required for positioning of the mitotic spindle. The protein is Probable prefoldin subunit 6 (pfd-6) of Caenorhabditis elegans.